Reading from the N-terminus, the 320-residue chain is Protoheme IX farnesyltransferase (320 aa).

The interval 1-24 (MSMITERPVSDPAGQSVSATGDGA) is disordered. 8 helical membrane passes run 33 to 55 (AVVAAYVALTKPRIVELLLVTTV), 68 to 88 (LWLMAVVLVGGSLAAGAASVL), 117 to 137 (NALIFGLVLATVSVTLLAVFT), 140 to 160 (LAAGLTLAAILYYDLVYTAWL), 183 to 203 (WAAVTGSLAPAAWALFGVVFF), 241 to 261 (ILVFAWLTVLVSLVTWPLGAG), 262 to 282 (MGPIYGLPTLVVGVIFLVEAH), and 300 to 320 (FHWSTTYLTVVFAAVALDALI).

Belongs to the UbiA prenyltransferase family. Protoheme IX farnesyltransferase subfamily.

It is found in the cell membrane. It carries out the reaction heme b + (2E,6E)-farnesyl diphosphate + H2O = Fe(II)-heme o + diphosphate. It functions in the pathway porphyrin-containing compound metabolism; heme O biosynthesis; heme O from protoheme: step 1/1. In terms of biological role, converts heme B (protoheme IX) to heme O by substitution of the vinyl group on carbon 2 of heme B porphyrin ring with a hydroxyethyl farnesyl side group. This chain is Protoheme IX farnesyltransferase, found in Salinispora tropica (strain ATCC BAA-916 / DSM 44818 / JCM 13857 / NBRC 105044 / CNB-440).